An 863-amino-acid polypeptide reads, in one-letter code: Ubiquitin carboxyl-terminal hydrolase 13 (863 aa).

Ser-114 is modified (phosphoserine; by AURKB). Thr-122 carries the phosphothreonine modification. Residues 187–295 (PVSKYANNLT…KHLAHFGIDM (109 aa)) form a UBP-type; degenerate zinc finger. Positions 211, 214, 231, and 244 each coordinate Zn(2+). Lys-311 is covalently cross-linked (Glycyl lysine isopeptide (Lys-Gly) (interchain with G-Cter in SUMO2)). Positions 336–861 (TGLKNLGNSC…LGYMYFYRRI (526 aa)) constitute a USP domain. Cys-345 (nucleophile) is an active-site residue. Lys-405 is covalently cross-linked (Glycyl lysine isopeptide (Lys-Gly) (interchain with G-Cter in SUMO2)). UBA domains lie at 652 to 693 (DIDE…IIVH) and 727 to 767 (QPPE…IFSH). His-823 (proton acceptor) is an active-site residue.

This sequence belongs to the peptidase C19 family. Interacts with UFD1. Interacts (via UBA domains) with SIAH2 (when ubiquitinated). Interacts with BAG6; the interaction is direct and may mediate UBL4A deubiquitination. Interacts (via UBA 2 domain) with AMFR; the interaction is direct. Interacts with UBL4A; may be indirect via BAG6. Interacts with NEDD4. Post-translationally, phosphorylated by AURKB at Ser-114; leading to stabilization of cell cycle proteins such as SKP2 and AURKB, but not MCL1. Highly expressed in ovary and testes.

The protein resides in the cytoplasm. The enzyme catalyses Thiol-dependent hydrolysis of ester, thioester, amide, peptide and isopeptide bonds formed by the C-terminal Gly of ubiquitin (a 76-residue protein attached to proteins as an intracellular targeting signal).. Its activity is regulated as follows. Specifically inhibited by spautin-1 (specific and potent autophagy inhibitor-1), a derivative of MBCQ that binds to USP13 and inhibits deubiquitinase activity. Regulated by PIK3C3/VPS34-containing complexes. The weak deubiquitinase activity in vitro suggests the existence of some mechanism that activates the enzyme. Functionally, deubiquitinase that mediates deubiquitination of target proteins such as BECN1, MITF, SKP2 and USP10 and is involved in various processes such as autophagy, endoplasmic reticulum-associated degradation (ERAD), cell cycle progression or DNA damage response. Component of a regulatory loop that controls autophagy and p53/TP53 levels: mediates deubiquitination of BECN1, a key regulator of autophagy, leading to stabilize the PIK3C3/VPS34-containing complexes. Alternatively, forms with NEDD4 a deubiquitination complex, which subsequently stabilizes VPS34 to promote autophagy. Also deubiquitinates USP10, an essential regulator of p53/TP53 stability. In turn, PIK3C3/VPS34-containing complexes regulate USP13 stability, suggesting the existence of a regulatory system by which PIK3C3/VPS34-containing complexes regulate p53/TP53 protein levels via USP10 and USP13. Recruited by nuclear UFD1 and mediates deubiquitination of SKP2, thereby regulating endoplasmic reticulum-associated degradation (ERAD). Also regulates ERAD through the deubiquitination of UBL4A a component of the BAG6/BAT3 complex. Mediates stabilization of SIAH2 independently of deubiquitinase activity: binds ubiquitinated SIAH2 and acts by impairing SIAH2 autoubiquitination. Regulates the cell cycle progression by stabilizing cell cycle proteins such as SKP2 and AURKB. In addition, plays an important role in maintaining genomic stability and in DNA replication checkpoint activation via regulation of RAP80 and TOPBP1. Deubiquitinates the multifunctional protein HMGB1 and subsequently drives its nucleocytoplasmic localization and its secretion. Positively regulates type I and type II interferon signalings by deubiquitinating STAT1 but negatively regulates antiviral response by deubiquitinating STING1. The protein is Ubiquitin carboxyl-terminal hydrolase 13 (USP13) of Homo sapiens (Human).